The chain runs to 488 residues: 3-octaprenyl-4-hydroxybenzoate carboxy-lyase (488 aa).

Asparagine 172 contacts Mn(2+). Prenylated FMN-binding positions include 175-177 (IYR), 189-191 (RWL), and 194-195 (RG). Glutamate 238 contributes to the Mn(2+) binding site. Residue aspartate 287 is the Proton donor of the active site.

This sequence belongs to the UbiD family. In terms of assembly, homohexamer. Prenylated FMN serves as cofactor. It depends on Mn(2+) as a cofactor.

It is found in the cell membrane. It carries out the reaction a 4-hydroxy-3-(all-trans-polyprenyl)benzoate + H(+) = a 2-(all-trans-polyprenyl)phenol + CO2. The protein operates within cofactor biosynthesis; ubiquinone biosynthesis. Catalyzes the decarboxylation of 3-octaprenyl-4-hydroxy benzoate to 2-octaprenylphenol, an intermediate step in ubiquinone biosynthesis. The chain is 3-octaprenyl-4-hydroxybenzoate carboxy-lyase from Pseudomonas aeruginosa (strain LESB58).